A 482-amino-acid polypeptide reads, in one-letter code: Adenylyltransferase and sulfurtransferase uba4 (482 aa).

Residues glycine 93, aspartate 114, serine 121 to arginine 125, lysine 138, and aspartate 182 to asparagine 183 contribute to the ATP site. Zn(2+)-binding residues include cysteine 231 and cysteine 234. The active-site Glycyl thioester intermediate; for adenylyltransferase activity is cysteine 248. The Zn(2+) site is built by cysteine 309 and cysteine 312. One can recognise a Rhodanese domain in the interval glutamate 362–proline 480. Cysteine 435 serves as the catalytic Cysteine persulfide intermediate; for sulfurtransferase activity.

The protein in the N-terminal section; belongs to the HesA/MoeB/ThiF family. UBA4 subfamily. Requires Zn(2+) as cofactor.

The protein resides in the cytoplasm. The protein localises to the cytosol. The enzyme catalyses [molybdopterin-synthase sulfur-carrier protein]-C-terminal Gly-Gly + ATP + H(+) = [molybdopterin-synthase sulfur-carrier protein]-C-terminal Gly-Gly-AMP + diphosphate. It carries out the reaction [molybdopterin-synthase sulfur-carrier protein]-C-terminal Gly-Gly-AMP + S-sulfanyl-L-cysteinyl-[cysteine desulfurase] + AH2 = [molybdopterin-synthase sulfur-carrier protein]-C-terminal-Gly-aminoethanethioate + L-cysteinyl-[cysteine desulfurase] + A + AMP + 2 H(+). It functions in the pathway tRNA modification; 5-methoxycarbonylmethyl-2-thiouridine-tRNA biosynthesis. Its pathway is cofactor biosynthesis; molybdopterin biosynthesis. Its function is as follows. Plays a central role in 2-thiolation of mcm(5)S(2)U at tRNA wobble positions of cytosolic tRNA(Lys), tRNA(Glu) and tRNA(Gln). Also essential during biosynthesis of the molybdenum cofactor. Acts by mediating the C-terminal thiocarboxylation of sulfur carriers urm1 and mocs2a. Its N-terminus first activates urm1 and mocs2a as acyl-adenylates (-COAMP), then the persulfide sulfur on the catalytic cysteine is transferred to urm1 and mocs2a to form thiocarboxylation (-COSH) of their C-terminus. The reaction probably involves hydrogen sulfide that is generated from the persulfide intermediate and that acts as a nucleophile towards urm1 and mocs2a. Subsequently, a transient disulfide bond is formed. Does not use thiosulfate as sulfur donor; nfs1 probably acting as a sulfur donor for thiocarboxylation reactions. The polypeptide is Adenylyltransferase and sulfurtransferase uba4 (Aspergillus niger (strain ATCC MYA-4892 / CBS 513.88 / FGSC A1513)).